Reading from the N-terminus, the 315-residue chain is Ribose-phosphate pyrophosphokinase (315 aa).

ATP contacts are provided by residues 40-42 and 99-100; these read DGE and RQ. Histidine 133 and aspartate 175 together coordinate Mg(2+). The active site involves lysine 198. D-ribose 5-phosphate is bound by residues arginine 200, aspartate 224, and 228-232; that span reads DTAHS.

This sequence belongs to the ribose-phosphate pyrophosphokinase family. Class I subfamily. In terms of assembly, homohexamer. Mg(2+) is required as a cofactor.

It localises to the cytoplasm. The enzyme catalyses D-ribose 5-phosphate + ATP = 5-phospho-alpha-D-ribose 1-diphosphate + AMP + H(+). It participates in metabolic intermediate biosynthesis; 5-phospho-alpha-D-ribose 1-diphosphate biosynthesis; 5-phospho-alpha-D-ribose 1-diphosphate from D-ribose 5-phosphate (route I): step 1/1. Functionally, involved in the biosynthesis of the central metabolite phospho-alpha-D-ribosyl-1-pyrophosphate (PRPP) via the transfer of pyrophosphoryl group from ATP to 1-hydroxyl of ribose-5-phosphate (Rib-5-P). This is Ribose-phosphate pyrophosphokinase from Thermotoga maritima (strain ATCC 43589 / DSM 3109 / JCM 10099 / NBRC 100826 / MSB8).